We begin with the raw amino-acid sequence, 374 residues long: tRNA-specific 2-thiouridylase MnmA (374 aa).

Residues 17–24 and Met43 contribute to the ATP site; that span reads GMSGGVDS. Residues 103 to 105 form an interaction with target base in tRNA region; sequence NPD. Catalysis depends on Cys108, which acts as the Nucleophile. A disulfide bridge links Cys108 with Cys204. An ATP-binding site is contributed by Gly132. Residues 154 to 156 form an interaction with tRNA region; the sequence is KDQ. The active-site Cysteine persulfide intermediate is the Cys204. The segment at 316 to 317 is interaction with tRNA; the sequence is RY.

It belongs to the MnmA/TRMU family.

It is found in the cytoplasm. It catalyses the reaction S-sulfanyl-L-cysteinyl-[protein] + uridine(34) in tRNA + AH2 + ATP = 2-thiouridine(34) in tRNA + L-cysteinyl-[protein] + A + AMP + diphosphate + H(+). Catalyzes the 2-thiolation of uridine at the wobble position (U34) of tRNA, leading to the formation of s(2)U34. The chain is tRNA-specific 2-thiouridylase MnmA from Pseudomonas putida (strain GB-1).